A 297-amino-acid polypeptide reads, in one-letter code: Carbamate kinase (297 aa).

This sequence belongs to the carbamate kinase family.

The protein resides in the cytoplasm. The catalysed reaction is hydrogencarbonate + NH4(+) + ATP = carbamoyl phosphate + ADP + H2O + H(+). It catalyses the reaction carbamate + ATP = carbamoyl phosphate + ADP. It carries out the reaction hydrogencarbonate + NH4(+) = carbamate + H2O + H(+). It participates in nitrogen metabolism; (S)-allantoin degradation. Kinase involved in the anaerobic nitrogen utilization via the assimilation of allantoin. Catalyzes the transfer of a phosphate group from carbamoyl phosphate to ADP to produce ATP and leave carbamate, which spontaneously hydrolyzes to ammonia and hydrogencarbonate. The polypeptide is Carbamate kinase (Escherichia coli (strain K12)).